Here is a 576-residue protein sequence, read N- to C-terminus: DM7 family protein GD16138 (576 aa).

Positions Phe454–Lys481 are disordered. Residues Leu457–Glu478 show a composition bias toward acidic residues.

Belongs to the DM7 family.

In Drosophila simulans (Fruit fly), this protein is DM7 family protein GD16138.